The primary structure comprises 341 residues: N-acetyl-gamma-glutamyl-phosphate reductase (341 aa).

The active site involves Cys-147.

The protein belongs to the NAGSA dehydrogenase family. Type 1 subfamily.

It is found in the cytoplasm. The catalysed reaction is N-acetyl-L-glutamate 5-semialdehyde + phosphate + NADP(+) = N-acetyl-L-glutamyl 5-phosphate + NADPH + H(+). The protein operates within amino-acid biosynthesis; L-arginine biosynthesis; N(2)-acetyl-L-ornithine from L-glutamate: step 3/4. Its function is as follows. Catalyzes the NADPH-dependent reduction of N-acetyl-5-glutamyl phosphate to yield N-acetyl-L-glutamate 5-semialdehyde. This chain is N-acetyl-gamma-glutamyl-phosphate reductase, found in Dehalococcoides mccartyi (strain ATCC BAA-2266 / KCTC 15142 / 195) (Dehalococcoides ethenogenes (strain 195)).